Here is a 98-residue protein sequence, read N- to C-terminus: uncharacterized protein (98 aa).

It belongs to the YciI family. As to quaternary structure, homodimer.

This is an uncharacterized protein from Haemophilus influenzae (strain ATCC 51907 / DSM 11121 / KW20 / Rd).